The sequence spans 470 residues: MNPNQKIITIGSVSLGLVVLNILLHIVSITITVLVLPGNGNNGSCNETVIREYNETVRIEKITQWHNTNVIEYIERPESDHFMNNTEPLCDAKGFAPFSKDNGIRIGSRGHVFVIREPFVSCSPTECRTFFITQGSLLNDKHSNGTVKDRSPYRTLMSVEIGQSPNVYQARFEAVAWSATRCHDGKKWMTIGVTGPDAKAVAVVHYGGIPTDVIQSWAGDILRTQESSCTCIQGECYWVMTDGPANRQAQYRAFKAKQGKIIGQTEISFNGGHIEECSCYPNEGKVECVCRDNWTGTNRPVLVISPDLSYRVGYLCAGLPSDTPRGEDSQFTGSCTSPMGNQGYGVKGFGFRQGIDVWMGRTISRTSRSGFEILRVRNGWVQNSKEQIKRQVVVDNLNWSGYSGSFTLPVELTKRNCLVPCFWVEMIRGKPEEKTIWTSSSSIVMCGVDHEIADWSWHDGAILPFDIDKM.

Residues 1–14 (MNPNQKIITIGSVS) are Intravirion-facing. The tract at residues 11-32 (GSVSLGLVVLNILLHIVSITIT) is involved in apical transport and lipid raft association. A helical transmembrane segment spans residues 15 to 35 (LGLVVLNILLHIVSITITVLV). The interval 32–86 (TVLVLPGNGNNGSCNETVIREYNETVRIEKITQWHNTNVIEYIERPESDHFMNNT) is hypervariable stalk region. Topologically, residues 36–470 (LPGNGNNGSC…AILPFDIDKM (435 aa)) are virion surface. 4 N-linked (GlcNAc...) asparagine; by host glycosylation sites follow: Asn-42, Asn-46, Asn-54, and Asn-84. The segment at 89–470 (LCDAKGFAPF…AILPFDIDKM (382 aa)) is head of neuraminidase. Disulfide bonds link Cys-90-Cys-417, Cys-122-Cys-127, Cys-182-Cys-229, Cys-231-Cys-236, Cys-277-Cys-290, Cys-279-Cys-288, Cys-316-Cys-335, and Cys-421-Cys-446. Position 116 (Arg-116) interacts with substrate. Residue Asn-144 is glycosylated (N-linked (GlcNAc...) asparagine; by host). Residue Asp-149 is the Proton donor/acceptor of the active site. Arg-150 provides a ligand contact to substrate. Residue 275-276 (EE) participates in substrate binding. Arg-291 is a binding site for substrate. Asp-292 lines the Ca(2+) pocket. The N-linked (GlcNAc...) asparagine; by host glycan is linked to Asn-293. Ca(2+) is bound by residues Gly-296 and Asp-322. Arg-368 contacts substrate. Asn-398 carries an N-linked (GlcNAc...) asparagine; by host glycan. Tyr-402 functions as the Nucleophile in the catalytic mechanism.

Belongs to the glycosyl hydrolase 34 family. In terms of assembly, homotetramer. The cofactor is Ca(2+). N-glycosylated.

Its subcellular location is the virion membrane. The protein resides in the host apical cell membrane. The enzyme catalyses Hydrolysis of alpha-(2-&gt;3)-, alpha-(2-&gt;6)-, alpha-(2-&gt;8)- glycosidic linkages of terminal sialic acid residues in oligosaccharides, glycoproteins, glycolipids, colominic acid and synthetic substrates.. With respect to regulation, inhibited by the neuraminidase inhibitors zanamivir (Relenza) and oseltamivir (Tamiflu). These drugs interfere with the release of progeny virus from infected cells and are effective against all influenza strains. Resistance to neuraminidase inhibitors is quite rare. In terms of biological role, catalyzes the removal of terminal sialic acid residues from viral and cellular glycoconjugates. Cleaves off the terminal sialic acids on the glycosylated HA during virus budding to facilitate virus release. Additionally helps virus spread through the circulation by further removing sialic acids from the cell surface. These cleavages prevent self-aggregation and ensure the efficient spread of the progeny virus from cell to cell. Otherwise, infection would be limited to one round of replication. Described as a receptor-destroying enzyme because it cleaves a terminal sialic acid from the cellular receptors. May facilitate viral invasion of the upper airways by cleaving the sialic acid moieties on the mucin of the airway epithelial cells. Likely to plays a role in the budding process through its association with lipid rafts during intracellular transport. May additionally display a raft-association independent effect on budding. Plays a role in the determination of host range restriction on replication and virulence. Sialidase activity in late endosome/lysosome traffic seems to enhance virus replication. The sequence is that of Neuraminidase from Influenza A virus (strain A/Guinea fowl/New York/4-3587/1984 H3N8).